A 260-amino-acid polypeptide reads, in one-letter code: Cytosolic Fe-S cluster assembly factor Nubp2 homolog (260 aa).

An ATP-binding site is contributed by 14-21 (GKGGVGKS). 2 residues coordinate [4Fe-4S] cluster: Cys-188 and Cys-191.

This sequence belongs to the Mrp/NBP35 ATP-binding proteins family. NUBP2/CFD1 subfamily. In terms of assembly, heterotetramer of 2 Nubp1 and 2 Nubp2 chains. [4Fe-4S] cluster serves as cofactor.

The protein resides in the cytoplasm. In terms of biological role, component of the cytosolic iron-sulfur (Fe/S) protein assembly (CIA) machinery. Required for maturation of extramitochondrial Fe-S proteins. The Nubp1-Nubp2 heterotetramer forms a Fe-S scaffold complex, mediating the de novo assembly of an Fe-S cluster and its transfer to target apoproteins. The protein is Cytosolic Fe-S cluster assembly factor Nubp2 homolog of Drosophila sechellia (Fruit fly).